The sequence spans 100 residues: Urease subunit gamma (100 aa).

It belongs to the urease gamma subunit family. As to quaternary structure, heterotrimer of UreA (gamma), UreB (beta) and UreC (alpha) subunits. Three heterotrimers associate to form the active enzyme.

The protein localises to the cytoplasm. It catalyses the reaction urea + 2 H2O + H(+) = hydrogencarbonate + 2 NH4(+). Its pathway is nitrogen metabolism; urea degradation; CO(2) and NH(3) from urea (urease route): step 1/1. The sequence is that of Urease subunit gamma from Flavobacterium johnsoniae (strain ATCC 17061 / DSM 2064 / JCM 8514 / BCRC 14874 / CCUG 350202 / NBRC 14942 / NCIMB 11054 / UW101) (Cytophaga johnsonae).